Reading from the N-terminus, the 480-residue chain is Citrate synthase 1, peroxisomal (480 aa).

Catalysis depends on residues histidine 321, histidine 360, and aspartate 416.

It belongs to the citrate synthase family. As to expression, expressed only in siliques. Not expressed in flower, stem, cauline leaf, young leaf, mature leaf and senescent leaf.

It is found in the peroxisome. The catalysed reaction is oxaloacetate + acetyl-CoA + H2O = citrate + CoA + H(+). Its pathway is carbohydrate metabolism; tricarboxylic acid cycle; isocitrate from oxaloacetate: step 1/2. The protein is Citrate synthase 1, peroxisomal (CSY1) of Arabidopsis thaliana (Mouse-ear cress).